The following is a 406-amino-acid chain: MRVVAAMSGGVDSAVAAARALEAGHEVIGVHLALSQSPEAVRAGSRGCCSLEDSADARRVADKLGIPFYVWDFSDRFKADVIDNFVDSYAIGETPNPCLRCNEKIKFEALLDRSIALGFDAVVTGHYAQLHDGVLRRGVDADKDQSYVLGVLTDEQLAHCMFPVGDTVKPEIREEAADAGFGVANKPDSHDICFIPDGRTQAFLGSKIGLRPGLVRDTGGETVAEHDGVYGFTVGQRKGLGLPRETLDGRPRYVTDIDAHTGTVTVGTREDLRVGGIIADRLKRLDPEVHGREFDCEVQVRAHGGVVPARARLVDDPTPVTPAGRVKEADELPWRLELELLQPLEGVARGQAAVVYRPDEDGDILLGSGTIRATTALGAPIEEQPAPGTVGAVDADAIEQGEDAQR.

ATP contacts are provided by residues 6-13 (AMSGGVDS) and Leu32. Cys101 (nucleophile) is an active-site residue. A disulfide bridge links Cys101 with Cys193. ATP is bound at residue Gly125. Residues 143 to 145 (KDQ) are interaction with tRNA. Catalysis depends on Cys193, which acts as the Cysteine persulfide intermediate. The segment at 378–406 (GAPIEEQPAPGTVGAVDADAIEQGEDAQR) is disordered. Over residues 396 to 406 (DAIEQGEDAQR) the composition is skewed to acidic residues.

The protein belongs to the MnmA/TRMU family.

Its subcellular location is the cytoplasm. The enzyme catalyses S-sulfanyl-L-cysteinyl-[protein] + uridine(34) in tRNA + AH2 + ATP = 2-thiouridine(34) in tRNA + L-cysteinyl-[protein] + A + AMP + diphosphate + H(+). Its function is as follows. Catalyzes the 2-thiolation of uridine at the wobble position (U34) of tRNA, leading to the formation of s(2)U34. This is tRNA-specific 2-thiouridylase MnmA from Corynebacterium urealyticum (strain ATCC 43042 / DSM 7109).